Reading from the N-terminus, the 313-residue chain is Carbamate kinase 2 (313 aa).

The protein belongs to the carbamate kinase family.

It localises to the cytoplasm. It catalyses the reaction hydrogencarbonate + NH4(+) + ATP = carbamoyl phosphate + ADP + H2O + H(+). The protein operates within metabolic intermediate metabolism; carbamoyl phosphate degradation; CO(2) and NH(3) from carbamoyl phosphate: step 1/1. This chain is Carbamate kinase 2 (arcC2), found in Staphylococcus aureus (strain MRSA252).